The following is a 561-amino-acid chain: Mesoderm induction early response protein 2 (561 aa).

2 disordered regions span residues 1-28 and 52-188; these read MAEASSLERQSPGAASCLPHSLCPGEPN and QNYG…EDPL. A Phosphoserine modification is found at S11. The segment covering 140–165 has biased composition (polar residues); the sequence is QSSADDLTPSVTSHEASDLFPSQSGS. Positions 195 to 292 constitute an ELM2 domain; sequence KEIMVGPQFQ…EALRRLRFNV (98 aa). The SANT domain occupies 297 to 349; it reads DGLCAWSEEERRNFEHGFRVHGKNFHLIQANKVRTRSVGECVEYYYLWKKSER. The segment at 360-515 is disordered; that stretch reads GRRKYGPSGN…DGEPEETVGP (156 aa). A compositionally biased stretch (low complexity) spans 417 to 428; it reads LSMGSSMSRSLG. The segment covering 439 to 451 has biased composition (pro residues); that stretch reads SSEPGPRLFPPLD. Residues 453–482 show a composition bias toward low complexity; that stretch reads PSALPSSRRPPALAEPAFFPPATAAPEPGA.

Part of a complex containing at least CDYL, MIER1, MIER2, HDAC1 and HDAC2.

The protein resides in the nucleus. Its function is as follows. Transcriptional repressor. The protein is Mesoderm induction early response protein 2 (MIER2) of Bos taurus (Bovine).